We begin with the raw amino-acid sequence, 128 residues long: Phycoerythrin alpha-3 chain, chloroplastic (128 aa).

Residues 1 to 52 constitute a chloroplast transit peptide; the sequence is MFAKTLASLAVIGSAAAYVPMMSMDMGRREVVQAGAAAAAVTPFLSGAPAGA. K56 is modified (5-hydroxylysine). Residues 70 to 89 form a disordered region; it reads GCSRAPKESTGGKAGGQDDE. Residues C71, R73, 77-78, and K93 contribute to the 15,16-dihydrobiliverdin site; that span reads ES.

Belongs to the phycoerythrin family. In terms of assembly, heterotetramer of 2 different alpha chains and 2 identical beta chains. The subunit composition could comprise of any combination of 2 out of 4 different alpha units with an invariant beta unit. In terms of processing, contains one covalently linked 15,16-dihydrobiliverdin chromophore.

It localises to the plastid. It is found in the chloroplast thylakoid membrane. Functionally, light-harvesting photosynthetic tetrapyrrole chromophore-protein from the phycobiliprotein complex. This is Phycoerythrin alpha-3 chain, chloroplastic (cpeA3) from Rhodomonas sp. (strain CS 24) (Chroomonas sp. (strain CS24)).